Reading from the N-terminus, the 253-residue chain is Dof zinc finger protein DOF3.4 (253 aa).

The Dof-type zinc finger occupies 30-84; sequence LPCPRCDSSNTKFCYYNNYNFSQPRHFCKACRRYWTHGGTLRDVPVGGGTRKSAK. C32, C35, C57, and C60 together coordinate Zn(2+). The tract at residues 73–103 is disordered; that stretch reads VPVGGGTRKSAKRSRTCSNSSSSSVSGVVSN. Positions 90–103 are enriched in low complexity; the sequence is SNSSSSSVSGVVSN.

In terms of assembly, interacts with OBF4 or OBF5. In terms of tissue distribution, constitutively expressed in the whole plant.

It is found in the nucleus. Its function is as follows. Transcription factor that binds specifically to a 5'-AA[AG]G-3' consensus core sequence. Enhances the DNA binding of OBF transcription factors to OCS elements. The polypeptide is Dof zinc finger protein DOF3.4 (DOF3.4) (Arabidopsis thaliana (Mouse-ear cress)).